Consider the following 66-residue polypeptide: Large ribosomal subunit protein bL32 (66 aa).

Belongs to the bacterial ribosomal protein bL32 family.

The polypeptide is Large ribosomal subunit protein bL32 (Rickettsia bellii (strain OSU 85-389)).